A 217-amino-acid polypeptide reads, in one-letter code: uncharacterized protein (217 aa).

An N-terminal signal peptide occupies residues 1–24 (MRYTVLIALQGALLLLLLIDDGQG).

This is an uncharacterized protein from Aedes vexans (Inland floodwater mosquito).